A 316-amino-acid chain; its full sequence is Mycothiol acetyltransferase (316 aa).

N-acetyltransferase domains lie at 16 to 153 (REVR…VPAV) and 156 to 316 (VRIR…PAAN). 1D-myo-inositol 2-(L-cysteinylamino)-2-deoxy-alpha-D-glucopyranoside is bound at residue E36. Residues 83–85 (LVV) and 91–96 (RRGIGS) contribute to the acetyl-CoA site. 3 residues coordinate 1D-myo-inositol 2-(L-cysteinylamino)-2-deoxy-alpha-D-glucopyranoside: E183, K228, and E238. Acetyl-CoA contacts are provided by residues 242–244 (VGV) and 249–255 (QGRGLGQ). 1D-myo-inositol 2-(L-cysteinylamino)-2-deoxy-alpha-D-glucopyranoside is bound at residue Y283. 288–293 (NVAAVR) contacts acetyl-CoA.

This sequence belongs to the acetyltransferase family. MshD subfamily. In terms of assembly, monomer.

It carries out the reaction 1D-myo-inositol 2-(L-cysteinylamino)-2-deoxy-alpha-D-glucopyranoside + acetyl-CoA = mycothiol + CoA + H(+). Its function is as follows. Catalyzes the transfer of acetyl from acetyl-CoA to desacetylmycothiol (Cys-GlcN-Ins) to form mycothiol. This is Mycothiol acetyltransferase from Mycolicibacterium paratuberculosis (strain ATCC BAA-968 / K-10) (Mycobacterium paratuberculosis).